A 197-amino-acid chain; its full sequence is Phosphoheptose isomerase (197 aa).

The 161-residue stretch at Met37–Met197 folds into the SIS domain. Asn52–Gly54 is a binding site for substrate. Zn(2+) is bound by residues His61 and Glu65. Substrate-binding positions include Glu65, Asn94–Asp95, Ser120–Ser122, Ser125, and Gln175. Zn(2+)-binding residues include Gln175 and His183.

The protein belongs to the SIS family. GmhA subfamily. Homotetramer. Zn(2+) is required as a cofactor.

It localises to the cytoplasm. The catalysed reaction is 2 D-sedoheptulose 7-phosphate = D-glycero-alpha-D-manno-heptose 7-phosphate + D-glycero-beta-D-manno-heptose 7-phosphate. It functions in the pathway carbohydrate biosynthesis; D-glycero-D-manno-heptose 7-phosphate biosynthesis; D-glycero-alpha-D-manno-heptose 7-phosphate and D-glycero-beta-D-manno-heptose 7-phosphate from sedoheptulose 7-phosphate: step 1/1. In terms of biological role, catalyzes the isomerization of sedoheptulose 7-phosphate in D-glycero-D-manno-heptose 7-phosphate. This is Phosphoheptose isomerase from Neisseria meningitidis serogroup C / serotype 2a (strain ATCC 700532 / DSM 15464 / FAM18).